A 377-amino-acid chain; its full sequence is Phosphoserine aminotransferase (377 aa).

Arg43 serves as a coordination point for L-glutamate. 4 residues coordinate pyridoxal 5'-phosphate: Trp105, Thr164, Asp189, and Gln212. Lys213 bears the N6-(pyridoxal phosphate)lysine mark. 254-255 is a binding site for pyridoxal 5'-phosphate; the sequence is NT.

Belongs to the class-V pyridoxal-phosphate-dependent aminotransferase family. SerC subfamily. In terms of assembly, homodimer. Pyridoxal 5'-phosphate serves as cofactor.

It is found in the cytoplasm. It catalyses the reaction O-phospho-L-serine + 2-oxoglutarate = 3-phosphooxypyruvate + L-glutamate. The catalysed reaction is 4-(phosphooxy)-L-threonine + 2-oxoglutarate = (R)-3-hydroxy-2-oxo-4-phosphooxybutanoate + L-glutamate. It participates in amino-acid biosynthesis; L-serine biosynthesis; L-serine from 3-phospho-D-glycerate: step 2/3. It functions in the pathway cofactor biosynthesis; pyridoxine 5'-phosphate biosynthesis; pyridoxine 5'-phosphate from D-erythrose 4-phosphate: step 3/5. Catalyzes the reversible conversion of 3-phosphohydroxypyruvate to phosphoserine and of 3-hydroxy-2-oxo-4-phosphonooxybutanoate to phosphohydroxythreonine. The polypeptide is Phosphoserine aminotransferase (Bordetella pertussis (strain Tohama I / ATCC BAA-589 / NCTC 13251)).